The following is a 569-amino-acid chain: BTB/POZ domain-containing protein At3g50840 (569 aa).

The region spanning 18–87 is the BTB domain; sequence SDIEIEVDDI…SYGFKVDISV (70 aa). The NPH3 domain maps to 194–459; the sequence is ELWFEDLTEL…VQVLFLEQLQ (266 aa). Residues 240-259 are compositionally biased toward low complexity; the sequence is ISRSSSASSSSSSSSTTIAS. Positions 240–261 are disordered; it reads ISRSSSASSSSSSSSTTIASEN. A Phosphotyrosine modification is found at Y400.

Belongs to the NPH3 family.

Its pathway is protein modification; protein ubiquitination. Functionally, may act as a substrate-specific adapter of an E3 ubiquitin-protein ligase complex (CUL3-RBX1-BTB) which mediates the ubiquitination and subsequent proteasomal degradation of target proteins. This is BTB/POZ domain-containing protein At3g50840 from Arabidopsis thaliana (Mouse-ear cress).